Consider the following 214-residue polypeptide: External core antigen (214 aa).

The first 19 residues, 1 to 19 (MQLFHLCLIISCTCPTIQA), serve as a signal peptide directing secretion. The interval 25-27 (GWL) is HBEAG. The segment at 165–214 (NAPILSTLPETTVVRRRDRGRSPRRRTPSPRRRRSQSPRRRRSQSRESQC) is disordered. A compositionally biased stretch (basic residues) spans 178 to 207 (VRRRDRGRSPRRRTPSPRRRRSQSPRRRRS). A 1; half-length repeat occupies 186 to 192 (SPRRRTP). Positions 186–208 (SPRRRTPSPRRRRSQSPRRRRSQ) are 3 X 8 AA repeats of S-P-R-R-R-R-S-Q. Positions 186-214 (SPRRRTPSPRRRRSQSPRRRRSQSRESQC) are excised as a propeptide. 2 consecutive repeat copies span residues 193-200 (SPRRRRSQ) and 201-208 (SPRRRRSQ).

This sequence belongs to the orthohepadnavirus precore antigen family. In terms of assembly, homodimerizes. In terms of processing, phosphorylated. Post-translationally, cleaved by host furin.

It localises to the secreted. The protein localises to the host nucleus. In terms of biological role, may regulate immune response to the intracellular capsid in acting as a T-cell tolerogen, by having an immunoregulatory effect which prevents destruction of infected cells by cytotoxic T-cells. This immune regulation may predispose to chronicity during perinatal infections and prevent severe liver injury during adult infections. The chain is External core antigen from Homo sapiens (Human).